An 859-amino-acid polypeptide reads, in one-letter code: Low-density lipoprotein receptor-related protein 12 (859 aa).

The first 32 residues, 1–32 (MACRWSTKESPRWRSALLLLFLAGVYGNGALA), serve as a signal peptide directing secretion. The Extracellular segment spans residues 33 to 492 (EHSENVHISG…ENCPVIVPTR (460 aa)). 2 disulfides stabilise this stretch: C47/C76 and C103/C122. The 113-residue stretch at 47 to 159 (CGETPEQIRA…KGFRLAYFSG (113 aa)) folds into the CUB 1 domain. N75 carries N-linked (GlcNAc...) asparagine glycosylation. The N-linked (GlcNAc...) asparagine glycan is linked to N146. 2 LDL-receptor class A domains span residues 165 to 201 (NCAC…EICA) and 214 to 255 (PCAY…IDCD). 7 disulfide bridges follow: C166–C178, C173–C191, C185–C200, C215–C232, C222–C245, C239–C254, and C259–C285. The region spanning 259 to 372 (CGQWLKYFYG…RGFNATYQVD (114 aa)) is the CUB 2 domain. N-linked (GlcNAc...) asparagine glycans are attached at residues N284 and N366. LDL-receptor class A domains follow at residues 374–411 (FCLP…TNCT), 412–449 (MCQK…KNCF), and 450–486 (FCQP…ENCP). Disulfide bonds link C375/C388, C382/C401, C395/C410, C413/C426, C420/C439, C433/C448, C451/C463, C458/C476, and C470/C485. N-linked (GlcNAc...) asparagine glycosylation is present at N409. N441 carries N-linked (GlcNAc...) asparagine glycosylation. A helical transmembrane segment spans residues 493 to 513 (VITAAVIGSLICGLLLVIALG). The Cytoplasmic portion of the chain corresponds to 514-859 (CTCKLYSLRM…TSDDEALLLC (346 aa)). Disordered stretches follow at residues 623 to 678 (ADGD…LPQK), 693 to 723 (ASSS…SPAR), 748 to 770 (SSLS…REDD), and 801 to 823 (DQGQ…SNRD). Polar residues-rich tracts occupy residues 748 to 757 (SSLSQNQSPL) and 801 to 814 (DQGQ…NATN).

It belongs to the LDLR family. In terms of assembly, may interact with RACK1, ZFYVE9 and NMRK2. Widely expressed in heart, skeletal muscle, brain, lung, placenta and pancreas, but not in tissues consisting of a large number of epithelial cells, such as liver and kidney. Expressed at very low levels in a number of tumor-derived cell lines.

The protein resides in the membrane. It localises to the coated pit. In terms of biological role, probable receptor, which may be involved in the internalization of lipophilic molecules and/or signal transduction. May act as a tumor suppressor. This is Low-density lipoprotein receptor-related protein 12 (LRP12) from Homo sapiens (Human).